Consider the following 353-residue polypeptide: Fasciculation and elongation protein zeta-2 (353 aa).

The segment at 19–49 is disordered; that stretch reads SLLDQENCNASPEPGAEAGAEAGGGADGFPA. Positions 28–38 are enriched in low complexity; the sequence is ASPEPGAEAGA. A phosphoserine mark is found at serine 135, serine 176, and serine 195. Positions 214-286 form a coiled coil; that stretch reads KRLSVSELNE…AKKKKKLKNG (73 aa). Residues 271–300 are disordered; the sequence is KEHKETAKKKKKLKNGSSQNGKNERSHMPG.

The protein belongs to the zygin family. Homodimer; disulfide-linked. May form heterodimers with FEZ1. Interacts with synaptotagmin. In terms of tissue distribution, expressed in nonneural tissues, such as heart, lung, spleen, muscle, testis, placenta and melanocytes.

Its function is as follows. Involved in axonal outgrowth and fasciculation. This chain is Fasciculation and elongation protein zeta-2 (FEZ2), found in Homo sapiens (Human).